Consider the following 690-residue polypeptide: UvrABC system protein C (690 aa).

One can recognise a GIY-YIG domain in the interval 15–94 (TDPGVYTFRD…IKRFNPRFNV (80 aa)). Residues 207–242 (EPVLRRVRKEMEQASENLDFERAASLRDQLQAMQKS) enclose the UVR domain.

The protein belongs to the UvrC family. In terms of assembly, interacts with UvrB in an incision complex.

The protein resides in the cytoplasm. The UvrABC repair system catalyzes the recognition and processing of DNA lesions. UvrC both incises the 5' and 3' sides of the lesion. The N-terminal half is responsible for the 3' incision and the C-terminal half is responsible for the 5' incision. The polypeptide is UvrABC system protein C (Corynebacterium jeikeium (strain K411)).